The following is an 808-amino-acid chain: Zinc finger protein 841 (808 aa).

Lys137 is covalently cross-linked (Glycyl lysine isopeptide (Lys-Gly) (interchain with G-Cter in SUMO2)). Residues 145 to 167 (YIGNECGKAFRVSSSLINHQMIH) form a C2H2-type 1; degenerate zinc finger. The C2H2-type 2; degenerate zinc finger occupies 173–195 (YRCNESGKAFHRGSLLTVHQIVH). C2H2-type zinc fingers lie at residues 201–223 (YQCDVCGRIFRQNSDLVNHRRSH), 229–251 (YICNECGKSFSKSSHLAVHQRIH), 257–279 (YKCNRCGKCFSQSSSLATHQTVH), 285–307 (YKCNECGKTFKRNSSLTAHHIIH), 313–335 (YTCDVCGKVFYQNSQLVRHQIIH), 341–363 (YKCNECGKVFFQRSRLAGHRRIH), 369–391 (YKCNECGKVFSQHSHLAVHQRVH), 397–419 (YKCNECGKAFNWGSLLTVHQRIH), 425–447 (YKCNVCGKVFNYGGYLSVHMRCH), 453–475 (LHCNKCGMVFTYYSCLARHQRMH), 481–503 (YKCNVCGKVFIDSGNLSIHRRSH), 509–531 (FQCNECGKVFSYYSCLARHRKIH), and 537–559 (YKCNDCGKAYTQRSSLTKHLVIH). Residues Lys554 and Lys579 each participate in a glycyl lysine isopeptide (Lys-Gly) (interchain with G-Cter in SUMO2) cross-link. A C2H2-type 16; degenerate zinc finger spans residues 565-587 (YHCNEFGEAFIQSSKLARYHRNP). C2H2-type zinc fingers lie at residues 593–615 (HKCSECGRTFSHKTSLVYHQRRH), 621–643 (YKCIECGKVFNSTTTLARHRRIH), 649–671 (YKCNECGKVFRYRSGLARHWSIH), 677–699 (YKCNECGKAFRVRSILLNHQMMH), 705–727 (YKCNECGKAFIERSNLVYHQRNH), 733–755 (YKCMECGKAFGRRSCLTKHQRIH), and 761–783 (YKCNECGKSYISRSGLTKHQIKH). A Glycyl lysine isopeptide (Lys-Gly) (interchain with G-Cter in SUMO2) cross-link involves residue Lys791.

It belongs to the krueppel C2H2-type zinc-finger protein family.

The protein localises to the nucleus. In terms of biological role, may be involved in transcriptional regulation. This is Zinc finger protein 841 (ZNF841) from Homo sapiens (Human).